We begin with the raw amino-acid sequence, 418 residues long: Nuclear hormone receptor 114 (418 aa).

A DNA-binding region (nuclear receptor) is located at residues 12–87 (DHVCLVCQDF…VGMDRNALQQ (76 aa)). NR C4-type zinc fingers lie at residues 15–35 (CLVC…CVGC) and 51–70 (CQFE…CRYC). The segment at 89 to 130 (RDPIGYTKRTRRPKKELKTTSDCSSDEGASTPPSVSPLQLSP) is disordered. The region spanning 170 to 409 (PIRSLHEALC…AFARQLFFGD (240 aa)) is the NR LBD domain. Residues 398 to 409 (FSAFARQLFFGD) form an AF-2 region.

This sequence belongs to the nuclear hormone receptor family. In terms of tissue distribution, expressed in germ and intestinal cells and at low levels in the hypodermis.

It is found in the nucleus. Its function is as follows. Probable transcription factor which may have a role in detoxifying dietary metabolites arising from bacterial tryptophan metabolism. Required for fertility and involved in proper postembryonic germline development, especially germline stem cell (GSC) proliferation. Required for activation of the methionine/S-adenosylmethionine (Met/SAM) cycle in response to low levels of SAM. The chain is Nuclear hormone receptor 114 from Caenorhabditis elegans.